Reading from the N-terminus, the 142-residue chain is uncharacterized protein (142 aa).

The span at 1–14 (MKNVSPRRNKHYKS) shows a compositional bias: basic residues. A disordered region spans residues 1-40 (MKNVSPRRNKHYKSYKPQVPLKKPVLLPQHPPYRNRRKKK). Residues 16–28 (KPQVPLKKPVLLP) are compositionally biased toward low complexity.

This is an uncharacterized protein from Aquifex aeolicus (strain VF5).